A 111-amino-acid chain; its full sequence is FK506-binding protein 1 (111 aa).

The segment at 1-20 is disordered; that stretch reads MGVEKTIITQGSGPSPQVGQ. The segment covering 7–20 has biased composition (polar residues); that stretch reads IITQGSGPSPQVGQ. One can recognise a PPIase FKBP-type domain in the interval 19–111; it reads GQKVTMEYTG…IFDVELKKIG (93 aa).

This sequence belongs to the FKBP-type PPIase family. FKBP1 subfamily.

The protein resides in the cytoplasm. It carries out the reaction [protein]-peptidylproline (omega=180) = [protein]-peptidylproline (omega=0). Its activity is regulated as follows. Inhibited by both FK506 and rapamycin. Its function is as follows. PPIases accelerate the folding of proteins. It catalyzes the cis-trans isomerization of proline imidic peptide bonds in oligopeptides. This chain is FK506-binding protein 1 (FPR1), found in Gibberella zeae (strain ATCC MYA-4620 / CBS 123657 / FGSC 9075 / NRRL 31084 / PH-1) (Wheat head blight fungus).